We begin with the raw amino-acid sequence, 245 residues long: Large ribosomal subunit protein uL2 (245 aa).

Residues 196-226 (SPYAHPHGGGSHQKGGTPVSKTAPPGQKVGF) form a disordered region.

This sequence belongs to the universal ribosomal protein uL2 family. As to quaternary structure, part of the 50S ribosomal subunit. Forms a bridge to the 30S subunit in the 70S ribosome.

Functionally, one of the primary rRNA binding proteins. Required for association of the 30S and 50S subunits to form the 70S ribosome, for tRNA binding and peptide bond formation. It has been suggested to have peptidyltransferase activity; this is somewhat controversial. Makes several contacts with the 16S rRNA in the 70S ribosome. The polypeptide is Large ribosomal subunit protein uL2 (Pyrobaculum neutrophilum (strain DSM 2338 / JCM 9278 / NBRC 100436 / V24Sta) (Thermoproteus neutrophilus)).